The chain runs to 581 residues: Chaperonin GroEL 1 (581 aa).

Residues 29-32 (TIGP), 86-90 (DGTTT), G413, and D492 contribute to the ATP site. The disordered stretch occupies residues 522–543 (PEPEPAAPGGPSGDPMGGMGGM). Positions 531–543 (GPSGDPMGGMGGM) are enriched in gly residues.

The protein belongs to the chaperonin (HSP60) family. Forms a cylinder of 14 subunits composed of two heptameric rings stacked back-to-back. Interacts with the co-chaperonin GroES.

It is found in the cytoplasm. The enzyme catalyses ATP + H2O + a folded polypeptide = ADP + phosphate + an unfolded polypeptide.. Functionally, together with its co-chaperonin GroES, plays an essential role in assisting protein folding. The GroEL-GroES system forms a nano-cage that allows encapsulation of the non-native substrate proteins and provides a physical environment optimized to promote and accelerate protein folding. The protein is Chaperonin GroEL 1 of Prochlorococcus marinus (strain MIT 9215).